We begin with the raw amino-acid sequence, 134 residues long: UPF0412 protein YaaI (134 aa).

A signal peptide spans 1–23 (MKSVFTLSASLAISLMLCCTAQA).

Belongs to the UPF0412 family.

In Escherichia coli O17:K52:H18 (strain UMN026 / ExPEC), this protein is UPF0412 protein YaaI.